A 162-amino-acid polypeptide reads, in one-letter code: Photosystem II extrinsic protein V (162 aa).

A signal peptide spans methionine 1–serine 25. Heme c is bound by residues cysteine 62, cysteine 65, histidine 66, and histidine 117.

This sequence belongs to the cytochrome c family. PsbV subfamily. In terms of assembly, PSII is composed of 1 copy each of membrane proteins PsbA, PsbB, PsbC, PsbD, PsbE, PsbF, PsbH, PsbI, PsbJ, PsbK, PsbL, PsbM, PsbT, PsbX, PsbY, PsbZ, Psb30/Ycf12, at least 3 peripheral proteins of the oxygen-evolving complex and a large number of cofactors. It forms dimeric complexes. Heme c serves as cofactor.

The protein resides in the plastid. It localises to the chloroplast thylakoid membrane. Its function is as follows. One of the extrinsic, lumenal subunits of photosystem II (PSII). PSII is a light-driven water plastoquinone oxidoreductase, using light energy to abstract electrons from H(2)O, generating a proton gradient subsequently used for ATP formation. The extrinsic proteins stabilize the structure of photosystem II oxygen-evolving complex (OEC), the ion environment of oxygen evolution and protect the OEC against heat-induced inactivation. This is Photosystem II extrinsic protein V from Guillardia theta (Cryptophyte).